The sequence spans 103 residues: Large ribosomal subunit protein bL21 (103 aa).

Belongs to the bacterial ribosomal protein bL21 family. As to quaternary structure, part of the 50S ribosomal subunit. Contacts protein L20.

This protein binds to 23S rRNA in the presence of protein L20. This is Large ribosomal subunit protein bL21 from Salmonella agona (strain SL483).